The following is a 260-amino-acid chain: Pyridoxine 5'-phosphate synthase (260 aa).

Position 6 (N6) interacts with 3-amino-2-oxopropyl phosphate. 8–9 (DH) provides a ligand contact to 1-deoxy-D-xylulose 5-phosphate. R17 is a 3-amino-2-oxopropyl phosphate binding site. H42 functions as the Proton acceptor in the catalytic mechanism. 2 residues coordinate 1-deoxy-D-xylulose 5-phosphate: R44 and H49. E69 (proton acceptor) is an active-site residue. Position 99 (T99) interacts with 1-deoxy-D-xylulose 5-phosphate. H213 (proton donor) is an active-site residue. 3-amino-2-oxopropyl phosphate is bound by residues G214 and 235-236 (GQ).

The protein belongs to the PNP synthase family. Homooctamer; tetramer of dimers.

Its subcellular location is the cytoplasm. The catalysed reaction is 3-amino-2-oxopropyl phosphate + 1-deoxy-D-xylulose 5-phosphate = pyridoxine 5'-phosphate + phosphate + 2 H2O + H(+). Its pathway is cofactor biosynthesis; pyridoxine 5'-phosphate biosynthesis; pyridoxine 5'-phosphate from D-erythrose 4-phosphate: step 5/5. In terms of biological role, catalyzes the complicated ring closure reaction between the two acyclic compounds 1-deoxy-D-xylulose-5-phosphate (DXP) and 3-amino-2-oxopropyl phosphate (1-amino-acetone-3-phosphate or AAP) to form pyridoxine 5'-phosphate (PNP) and inorganic phosphate. This is Pyridoxine 5'-phosphate synthase from Sulfurimonas denitrificans (strain ATCC 33889 / DSM 1251) (Thiomicrospira denitrificans (strain ATCC 33889 / DSM 1251)).